The chain runs to 608 residues: Alpha-1,3-galactosidase A (608 aa).

The N-terminal stretch at 1 to 21 (MQRRTFIKSISAMMATSTTLG) is a signal peptide. A lipid anchor (N-palmitoyl cysteine) is attached at Cys22. Cys22 is lipidated: S-diacylglycerol cysteine. PbH1 repeat units lie at residues 262 to 292 (TKNT…KLDN), 318 to 340 (KGHV…NVHG), 426 to 448 (PDHV…LLTV), 449 to 470 (SGKI…KIGS), and 481 to 507 (VESV…DIVP).

It belongs to the glycosyl hydrolase 110 family. A subfamily.

It localises to the cell membrane. The enzyme catalyses Hydrolysis of terminal, non-reducing branched (1-&gt;3)-alpha-D-galactosidic residues, producing free D-galactose.. The catalysed reaction is Hydrolysis of terminal, non-reducing alpha-D-galactose residues in alpha-D-galactosides, including galactose oligosaccharides, galactomannans and galactolipids.. In terms of biological role, alpha-galactosidase that specifically removes branched alpha-1,3-linked galactose residues present in blood group B antigens. Has no activity toward linear alpha-1,3-linked galactose residues. This chain is Alpha-1,3-galactosidase A (glaA), found in Shewanella woodyi (strain ATCC 51908 / MS32).